A 926-amino-acid polypeptide reads, in one-letter code: Alpha-L-rhamnosidase (926 aa).

A signal peptide spans 1-25; the sequence is MILHKSVFKSYIYVLTYFVFFSVMS. A lipid anchor (N-palmitoyl cysteine) is attached at Cys26. Cys26 carries S-diacylglycerol cysteine lipidation. Residues Asp504, 508–510, Asp517, and Trp569 each bind alpha-L-rhamnose; that span reads RDE. The active-site Proton donor is the Glu510. Glu779 acts as the Proton acceptor in catalysis. His800 is a binding site for alpha-L-rhamnose.

The protein belongs to the glycosyl hydrolase 78 family.

The protein resides in the cell membrane. The enzyme catalyses Hydrolysis of terminal non-reducing alpha-L-rhamnose residues in alpha-L-rhamnosides.. Its function is as follows. Alpha-L-rhamnosidase involved in ulvan degradation. Ulvan is the main polysaccharide component of the Ulvales (green seaweed) cell wall. It is composed of disaccharide building blocks comprising 3-sulfated rhamnose (Rha3S) linked to D-glucuronic acid (GlcA), L-iduronic acid (IduA), or D-xylose (Xyl). Alpha-L-rhamnosidase converts Rha-Xyl-Rha3S, the product of a sulfatase acting on Rha3S-Xyl-Rha3S oligosaccharides, to Rha and Xyl-Rha3S. The enzyme is able to degrade p-nitrophenyl-alpha-L-rhamnopyranoside (PNP-Rha) in vitro. This is Alpha-L-rhamnosidase from Formosa agariphila (strain DSM 15362 / KCTC 12365 / LMG 23005 / KMM 3901 / M-2Alg 35-1).